The following is a 351-amino-acid chain: Minor outer capsid protein P9 (351 aa).

Disordered stretches follow at residues 245 to 281 and 288 to 307; these read GGVP…DQPE and KKVD…GNVS. A compositionally biased stretch (basic and acidic residues) spans 288-297; that stretch reads KKVDASKDAP.

Belongs to the phytoreovirus minor outer capsid protein P9 family.

Its subcellular location is the virion. The protein localises to the host cytoplasm. Its function is as follows. Minor outer capsid protein. The chain is Minor outer capsid protein P9 from Rice dwarf virus (RDV).